Reading from the N-terminus, the 146-residue chain is Small RNA-binding protein 11, chloroplastic (146 aa).

A chloroplast-targeting transit peptide spans 1–31 (MAALARIGGRHLKSVCLINSSASCFFTQRRG). The region spanning 34-112 (SKLFIGGLSF…RTIFVDYAKA (79 aa)) is the RRM domain. Ser42 carries the post-translational modification Phosphoserine.

Expressed in rosette leaves, cauline leaves, stems and flowers.

The protein localises to the plastid. It localises to the chloroplast. Functionally, probable RNA-binding protein that may be involved in salt and oxidative stress tolerance. This Arabidopsis thaliana (Mouse-ear cress) protein is Small RNA-binding protein 11, chloroplastic.